Consider the following 254-residue polypeptide: 4-hydroxy-tetrahydrodipicolinate reductase (254 aa).

Residue 7-12 participates in NAD(+) binding; the sequence is GASGRI. Arg-35 contributes to the NADP(+) binding site. Residues 91-93 and 115-118 each bind NAD(+); these read GTT and AHNM. The active-site Proton donor/acceptor is the His-147. Residue His-148 coordinates (S)-2,3,4,5-tetrahydrodipicolinate. Lys-151 acts as the Proton donor in catalysis. 157 to 158 is a binding site for (S)-2,3,4,5-tetrahydrodipicolinate; the sequence is GT.

It belongs to the DapB family.

It localises to the cytoplasm. It catalyses the reaction (S)-2,3,4,5-tetrahydrodipicolinate + NAD(+) + H2O = (2S,4S)-4-hydroxy-2,3,4,5-tetrahydrodipicolinate + NADH + H(+). The catalysed reaction is (S)-2,3,4,5-tetrahydrodipicolinate + NADP(+) + H2O = (2S,4S)-4-hydroxy-2,3,4,5-tetrahydrodipicolinate + NADPH + H(+). It participates in amino-acid biosynthesis; L-lysine biosynthesis via DAP pathway; (S)-tetrahydrodipicolinate from L-aspartate: step 4/4. In terms of biological role, catalyzes the conversion of 4-hydroxy-tetrahydrodipicolinate (HTPA) to tetrahydrodipicolinate. This chain is 4-hydroxy-tetrahydrodipicolinate reductase, found in Helicobacter pylori (strain ATCC 700392 / 26695) (Campylobacter pylori).